A 216-amino-acid chain; its full sequence is Heart- and neural crest derivatives-expressed protein 2 (216 aa).

A disordered region spans residues 74–115; that stretch reads MDHSHYGGVPPGSGPPGLGGPRPVKRRGTANRKERRRTQSIN. The span at 82-93 shows a compositional bias: gly residues; the sequence is VPPGSGPPGLGG. Residues 96-111 are compositionally biased toward basic residues; sequence PVKRRGTANRKERRRT. A bHLH domain is found at 98 to 150; the sequence is KRRGTANRKERRRTQSINSAFAELRECIPNVPADTKLSKIKTLRLATSYIAYL.

Efficient DNA binding requires dimerization with another bHLH protein.

The protein localises to the nucleus. Functionally, essential for cardiac morphogenesis. Binds DNA on E-box consensus sequence 5'-CANNTG-3'. Plays an important role in limb development, particularly in the establishment of anterior-posterior polarization of the limb bud. This Gallus gallus (Chicken) protein is Heart- and neural crest derivatives-expressed protein 2 (HAND2).